The chain runs to 120 residues: MFLLYEYDIFWAFLIISSAIPVLAFLISGVLSPIRKGPEKLSSYESGIDPIGDAWLQFRIRYYMFALVFVVFDVETVFLYPWAMSFDVLGVSAFIEAFIFVLILILGLVYAWRKGALEWS.

Helical transmembrane passes span 9–29 (IFWA…LISG), 64–84 (MFAL…PWAM), and 88–108 (VLGV…ILGL).

It belongs to the complex I subunit 3 family. As to quaternary structure, NDH is composed of at least 16 different subunits, 5 of which are encoded in the nucleus.

It localises to the plastid. The protein resides in the chloroplast thylakoid membrane. The enzyme catalyses a plastoquinone + NADH + (n+1) H(+)(in) = a plastoquinol + NAD(+) + n H(+)(out). It carries out the reaction a plastoquinone + NADPH + (n+1) H(+)(in) = a plastoquinol + NADP(+) + n H(+)(out). NDH shuttles electrons from NAD(P)H:plastoquinone, via FMN and iron-sulfur (Fe-S) centers, to quinones in the photosynthetic chain and possibly in a chloroplast respiratory chain. The immediate electron acceptor for the enzyme in this species is believed to be plastoquinone. Couples the redox reaction to proton translocation, and thus conserves the redox energy in a proton gradient. This is NAD(P)H-quinone oxidoreductase subunit 3, chloroplastic from Capsella bursa-pastoris (Shepherd's purse).